The sequence spans 1020 residues: Sodium/potassium-transporting ATPase subunit alpha-2 (1020 aa).

Residues 1-5 (MGRGA) constitute a propeptide that is removed on maturation. The interval 1–31 (MGRGAGREYSPAATTAENGGGKKKQKEKELD) is disordered. At 6 to 85 (GREYSPAATT…NALTPPPTTP (80 aa)) the chain is on the cytoplasmic side. Ser10 carries the post-translational modification Phosphoserine. An interaction with phosphoinositide-3 kinase region spans residues 80 to 82 (PPP). Residues 86–106 (EWVKFCRQLFGGFSILLWIGA) form a helical membrane-spanning segment. Topologically, residues 107–129 (LLCFLAYGILAAMEDEPSNDNLY) are extracellular. Residues 130-150 (LGIVLAAVVIVTGCFSYYQEA) form a helical membrane-spanning segment. At 151–286 (KSSKIMDSFK…VGQTPIAMEI (136 aa)) the chain is on the cytoplasmic side. Over residues 212–227 (DNSSLTGESEPQTRSP) the composition is skewed to polar residues. Positions 212-231 (DNSSLTGESEPQTRSPEFTH) are disordered. Residues 287–306 (EHFIQLITGVAVFLGVSFFV) form a helical membrane-spanning segment. The Extracellular portion of the chain corresponds to 307–318 (LSLILGYSWLEA). Residues 319-336 (VIFLIGIIVANVPEGLLA) traverse the membrane as a helical segment. Residues 337-769 (TVTVCLTLTA…EEGRLIFDNL (433 aa)) lie on the Cytoplasmic side of the membrane. Asp374 serves as the catalytic 4-aspartylphosphate intermediate. Phosphoserine is present on residues Ser439, Ser450, Ser496, and Ser559. Thr570 is modified (phosphothreonine). Phosphoserine is present on residues Ser587 and Ser672. Mg(2+)-binding residues include Asp714 and Asp718. The helical transmembrane segment at 770 to 789 (KKSIAYTLTSNIPEITPFLL) threads the bilayer. Residues 790–799 (FIIANIPLPL) are Extracellular-facing. Residues 800 to 820 (GTVTILCIDLGTDMVPAISLA) form a helical membrane-spanning segment. Residues 821 to 840 (YEAAESDIMKRQPRNSQTDK) lie on the Cytoplasmic side of the membrane. The residue at position 826 (Ser826) is a Phosphoserine. Residues 841–863 (LVNERLISMAYGQIGMIQALGGF) traverse the membrane as a helical segment. At 864–915 (FTYFVILAENGFLPSRLLGIRLDWDDRTTNDLEDSYGQEWTYEQRKVVEFTC) the chain is on the extracellular side. A helical transmembrane segment spans residues 916-935 (HTAFFASIVVVQWADLIICK). The Cytoplasmic segment spans residues 936–948 (TRRNSVFQQGMKN). Ser940 carries the post-translational modification Phosphoserine; by PKA. Residues 949-967 (KILIFGLLEETALAAFLSY) traverse the membrane as a helical segment. At 968-982 (CPGMGVALRMYPLKV) the chain is on the extracellular side. The helical transmembrane segment at 983–1003 (TWWFCAFPYSLLIFIYDEVRK) threads the bilayer. Residues 1004–1020 (LILRRYPGGWVEKETYY) lie on the Cytoplasmic side of the membrane.

Belongs to the cation transport ATPase (P-type) (TC 3.A.3) family. Type IIC subfamily. As to quaternary structure, the sodium/potassium-transporting ATPase is composed of a catalytic alpha subunit, an auxiliary non-catalytic beta subunit and an additional regulatory subunit. Interacts with regulatory subunit FXYD1.

Its subcellular location is the membrane. The protein localises to the cell membrane. The enzyme catalyses K(+)(out) + Na(+)(in) + ATP + H2O = K(+)(in) + Na(+)(out) + ADP + phosphate + H(+). This is the catalytic component of the active enzyme, which catalyzes the hydrolysis of ATP coupled with the exchange of sodium and potassium ions across the plasma membrane. This action creates the electrochemical gradient of sodium and potassium ions, providing the energy for active transport of various nutrients. The polypeptide is Sodium/potassium-transporting ATPase subunit alpha-2 (Atp1a2) (Mus musculus (Mouse)).